The sequence spans 408 residues: Inhibin beta B chain (408 aa).

An N-terminal signal peptide occupies residues 1 to 28 (MDGLPGRALGAACLLMLAVGSLGPGVWG). Residues 29–60 (SPTPPPLPAAPQPPPPPPGAPGGSQDTCTSCG) form a disordered region. The propeptide occupies 29-293 (SPTPPPLPAA…GDSRHRIRKR (265 aa)). A compositionally biased stretch (pro residues) spans 30-48 (PTPPPLPAAPQPPPPPPGA). Asn94 carries N-linked (GlcNAc...) asparagine glycosylation. Cystine bridges form between Cys297–Cys305, Cys304–Cys373, Cys333–Cys405, and Cys337–Cys407.

Belongs to the TGF-beta family. As to quaternary structure, dimeric, linked by one or more disulfide bonds. Inhibin B is a dimer of alpha and beta-B. Activin B is a homodimer of beta-B. Activin AB is a dimer of beta-A and beta-B. Interacts with FST and FSTL3.

Its subcellular location is the secreted. Its function is as follows. Inhibins and activins inhibit and activate, respectively, the secretion of follitropin by the pituitary gland. Inhibins/activins are involved in regulating a number of diverse functions such as hypothalamic and pituitary hormone secretion, gonadal hormone secretion, germ cell development and maturation, erythroid differentiation, insulin secretion, nerve cell survival, embryonic axial development or bone growth, depending on their subunit composition. Inhibins appear to oppose the functions of activins. Functionally, activin B is a dimer of alpha and beta-B that plays a role in several essential biological processes including embryonic development, stem cell maintenance and differentiation, haematopoiesis, cell proliferation and wound healing. Signals through type I receptor ACVR1C, abundantly expressed in pancreatic beta cells, and type II receptors like ACVR2A. Upon ligand binding, these receptors phosphorylate intracellular signaling mediators SMAD2 and SMAD3, which form a complex with SMAD4, translocate to the nucleus, and regulate gene expression. Plays a crucial role in the induction of hepcidin by inflammation through activation of ACVR1C and subsequent phosphorylation of SMAD1/5/8. Regulates adipocyte lipid metabolism by decreasing non-esterified fatty acids and glycerol release and increases intracellular triglyceride content. Stimulates wound healing by promoting cell migration and hair follicle regeneration through the JNK and ERK signaling pathways downstream of RHOA. In terms of biological role, inhibin B is a dimer of alpha and beta-B that plays a crucial role in the regulation of the reproductive system by inhibiting the secretion of follicle-stimulating hormone (FSH) from the anterior pituitary gland. Thereby, maintains reproductive homeostasis in both males and females. Acts as a more potent suppressor of FSH release than inhibin A. Functions as competitive receptor antagonist binding activin type II receptors with high affinity in the presence of the TGF-beta type III coreceptor/TGFBR3L. The polypeptide is Inhibin beta B chain (INHBB) (Bos taurus (Bovine)).